Reading from the N-terminus, the 608-residue chain is Ceramide kinase (608 aa).

Residues 160–367 form the DAGKc domain; that stretch reads ERPRNLLVFV…LDAMQVVRWK (208 aa). ATP is bound by residues 170–174, Thr-201, and 230–236; these read HPKSG and GDGFFNE. 229 to 232 is a binding site for substrate; sequence GGDG. Asp-231 (proton donor/acceptor) is an active-site residue. The segment at 254 to 280 is disordered; the sequence is PSDSFNSVQSRGSSSVPEPGDEVHETD. Residues 255–269 show a composition bias toward polar residues; the sequence is SDSFNSVQSRGSSSV. Ser-329 lines the ATP pocket.

Requires Ca(2+) as cofactor.

It catalyses the reaction an N-acylsphing-4-enine + ATP = an N-acylsphing-4-enine 1-phosphate + ADP + H(+). Its function is as follows. Catalyzes specifically the phosphorylation of ceramide to form ceramide 1-phosphate. Possesses high activity on ceramide analogs (C6, C8 synthetic ceramides) and lower activity on C6 and C8 dihydroceramides. Has weak activity on natural ceramides (a mixture of ceramides from bovine brain) and the synthetic substrate C2 ceramide. Has very poor activity on diacylglycerol and sphingosine. Ceramide is a critical sphingolipid metabolite that induces programmed cell death (PCD) in plants and ceramide-1-phosphate has a PCD suppressive effect. Thus, ceramide phosphorylation plays a role in the modulation of PCD and CERK activity is crucial for the maintenance of cell viability. The polypeptide is Ceramide kinase (CERK) (Arabidopsis thaliana (Mouse-ear cress)).